Here is a 785-residue protein sequence, read N- to C-terminus: E3 UFM1-protein ligase 1 homolog (785 aa).

The interval 404-483 (GGNASNQLDD…GGGGSNKKSV (80 aa)) is disordered.

Belongs to the UFL1 family.

Its function is as follows. E3 UFM1-protein ligase that mediates ufmylation of target proteins. The sequence is that of E3 UFM1-protein ligase 1 homolog from Drosophila willistoni (Fruit fly).